Here is a 99-residue protein sequence, read N- to C-terminus: DNA-binding protein Fis (99 aa).

The segment at residues 75–94 (QTRAANMLGINRGTLRKKLK) is a DNA-binding region (H-T-H motif).

Belongs to the transcriptional regulatory Fis family. As to quaternary structure, homodimer.

Activates ribosomal RNA transcription. Plays a direct role in upstream activation of rRNA promoters. The protein is DNA-binding protein Fis of Haemophilus influenzae (strain 86-028NP).